A 607-amino-acid polypeptide reads, in one-letter code: Elongation factor 4 (607 aa).

A tr-type G domain is found at 11-193 (EKIRNFSIIA…QIVEKVPAPT (183 aa)). GTP contacts are provided by residues 23 to 28 (DHGKST) and 140 to 143 (NKID).

The protein belongs to the TRAFAC class translation factor GTPase superfamily. Classic translation factor GTPase family. LepA subfamily.

It is found in the cell membrane. The enzyme catalyses GTP + H2O = GDP + phosphate + H(+). In terms of biological role, required for accurate and efficient protein synthesis under certain stress conditions. May act as a fidelity factor of the translation reaction, by catalyzing a one-codon backward translocation of tRNAs on improperly translocated ribosomes. Back-translocation proceeds from a post-translocation (POST) complex to a pre-translocation (PRE) complex, thus giving elongation factor G a second chance to translocate the tRNAs correctly. Binds to ribosomes in a GTP-dependent manner. The polypeptide is Elongation factor 4 (Streptococcus pneumoniae (strain Hungary19A-6)).